A 351-amino-acid chain; its full sequence is Nicotinate-nucleotide--dimethylbenzimidazole phosphoribosyltransferase (351 aa).

Residue Glu-317 is the Proton acceptor of the active site.

The protein belongs to the CobT family.

It carries out the reaction 5,6-dimethylbenzimidazole + nicotinate beta-D-ribonucleotide = alpha-ribazole 5'-phosphate + nicotinate + H(+). The protein operates within nucleoside biosynthesis; alpha-ribazole biosynthesis; alpha-ribazole from 5,6-dimethylbenzimidazole: step 1/2. In terms of biological role, catalyzes the synthesis of alpha-ribazole-5'-phosphate from nicotinate mononucleotide (NAMN) and 5,6-dimethylbenzimidazole (DMB). This Pseudomonas putida (strain ATCC 47054 / DSM 6125 / CFBP 8728 / NCIMB 11950 / KT2440) protein is Nicotinate-nucleotide--dimethylbenzimidazole phosphoribosyltransferase.